Here is a 252-residue protein sequence, read N- to C-terminus: Coenzyme F420:L-glutamate ligase (252 aa).

GTP contacts are provided by residues 12–15 (VPLE), 44–45 (HT), and Lys49. Position 114 (Asp114) interacts with a divalent metal cation. Asn117 contacts GTP. Positions 155, 156, and 213 each coordinate a divalent metal cation. A GTP-binding site is contributed by 211-218 (MGQADEGT).

The protein belongs to the CofE family. In terms of assembly, homodimer. Mg(2+) serves as cofactor. Requires Mn(2+) as cofactor. K(+) is required as a cofactor.

It carries out the reaction oxidized coenzyme F420-0 + GTP + L-glutamate = oxidized coenzyme F420-1 + GDP + phosphate + H(+). The enzyme catalyses oxidized coenzyme F420-1 + GTP + L-glutamate = oxidized coenzyme F420-2 + GDP + phosphate + H(+). Its pathway is cofactor biosynthesis; coenzyme F420 biosynthesis. Its function is as follows. Catalyzes the GTP-dependent successive addition of two or more gamma-linked L-glutamates to the L-lactyl phosphodiester of 7,8-didemethyl-8-hydroxy-5-deazariboflavin (F420-0) to form coenzyme F420-0-glutamyl-glutamate (F420-2) or polyglutamated F420 derivatives. The polypeptide is Coenzyme F420:L-glutamate ligase (Methanopyrus kandleri (strain AV19 / DSM 6324 / JCM 9639 / NBRC 100938)).